Consider the following 419-residue polypeptide: UDP-N-acetylglucosamine 1-carboxyvinyltransferase (419 aa).

Position 22–23 (22–23 (KN)) interacts with phosphoenolpyruvate. R93 contacts UDP-N-acetyl-alpha-D-glucosamine. The active-site Proton donor is the C117. 2-(S-cysteinyl)pyruvic acid O-phosphothioketal is present on C117. UDP-N-acetyl-alpha-D-glucosamine-binding residues include D307 and I329.

This sequence belongs to the EPSP synthase family. MurA subfamily.

Its subcellular location is the cytoplasm. The enzyme catalyses phosphoenolpyruvate + UDP-N-acetyl-alpha-D-glucosamine = UDP-N-acetyl-3-O-(1-carboxyvinyl)-alpha-D-glucosamine + phosphate. It participates in cell wall biogenesis; peptidoglycan biosynthesis. Functionally, cell wall formation. Adds enolpyruvyl to UDP-N-acetylglucosamine. The sequence is that of UDP-N-acetylglucosamine 1-carboxyvinyltransferase from Shewanella sp. (strain ANA-3).